The sequence spans 536 residues: Keratin, type II cytoskeletal 4 (536 aa).

Residues 1–145 (MISRQSSVRG…DPEIQKIRTA (145 aa)) form a head region. The residue at position 13 (arginine 13) is an Omega-N-methylarginine. Positions 146–181 (EREQIKTLNNKFASFIDKVRFLEQQNKVLETKWNLL) are coil 1A. Positions 146 to 457 (EREQIKTLNN…KLLEGEECRM (312 aa)) constitute an IF rod domain. Residues 182–200 (QQQTTTTSPRNLDPFFETY) form a linker 1 region. Positions 201–293 (INALRKNLDT…LYEAELSQMQ (93 aa)) are coil 1B. The interval 294–316 (THVSDTSVVLSMDNNRNLDLDGI) is linker 12. A coil 2 region spans residues 317–454 (IAEVRAQYEE…TYRKLLEGEE (138 aa)). Residues 455–524 (CRMSGECKSA…TSSATITKRS (70 aa)) form a tail region. The tract at residues 515–536 (TSSATITKRSPRTRQDPDGLQP) is disordered. A compositionally biased stretch (basic and acidic residues) spans 527-536 (TRQDPDGLQP).

This sequence belongs to the intermediate filament family. As to quaternary structure, heterotetramer of two type I and two type II keratins. keratin-4 is generally associated with keratin-13.

The polypeptide is Keratin, type II cytoskeletal 4 (Rattus norvegicus (Rat)).